The chain runs to 908 residues: Glutamate receptor ionotropic, kainate 2 (908 aa).

An N-terminal signal peptide occupies residues 1 to 31; sequence MQRIAGITKMVTHRRWLGLLLLLLCVGYSHG. The Extracellular segment spans residues 32–561; sequence MPHVLRFGGI…VFSFLNPLSP (530 aa). N-linked (GlcNAc...) asparagine glycosylation is found at Asn67, Asn73, Asn275, Asn378, Asn412, Asn423, and Asn430. A disulfide bond links Cys96 and Cys347. The L-glutamate site is built by Pro516, Ala518, and Arg523. Asn546 is a glycosylation site (N-linked (GlcNAc...) asparagine). The helical transmembrane segment at 562–582 threads the bilayer; that stretch reads DIWMYILLAYLGVSCVLFVIA. Topologically, residues 583–638 are cytoplasmic; the sequence is RFSPYEWYNPHPCNPDSDVVENNFTLLNSFWFGVGALMQQGSELMPKALSTRIVGG. A helical transmembrane segment spans residues 639–659; it reads IWWFFTLIIISSYTANLAAFL. At 660–819 the chain is on the extracellular side; that stretch reads TVERMESPID…KEASALGVQN (160 aa). The L-glutamate site is built by Ser689, Thr690, and Glu738. Cys750 and Cys804 are oxidised to a cystine. N-linked (GlcNAc...) asparagine glycosylation occurs at Asn751. Residues 820–840 form a helical membrane-spanning segment; the sequence is IGGIFIVLAAGLVLSVFVAVG. Topologically, residues 841–908 are cytoplasmic; the sequence is EFLYKSKQNA…RRLPGKETMA (68 aa).

It belongs to the glutamate-gated ion channel (TC 1.A.10.1) family. GRIK2 subfamily. In terms of assembly, homotetramer and heterotetramer with GRIK5. Tetramers may be formed by the dimerization of dimers.

Its subcellular location is the cell membrane. The protein resides in the postsynaptic cell membrane. It catalyses the reaction Ca(2+)(in) = Ca(2+)(out). The enzyme catalyses Na(+)(in) = Na(+)(out). Its activity is regulated as follows. Cold receptor activity activated by temperatures between 10-19 degrees Celsius. Functionally, ionotropic glutamate receptor that functions as a cation-permeable ligand-gated ion channel, gated by L-glutamate and the glutamatergic agonist kainic acid. L-glutamate acts as an excitatory neurotransmitter at many synapses in the central nervous system. Binding of the excitatory neurotransmitter L-glutamate induces a conformation change, leading to the opening of the cation channel, and thereby converts the chemical signal to an electrical impulse. The receptor then desensitizes rapidly and enters a transient inactive state, characterized by the presence of bound agonist. In terms of biological role, independent of its ionotropic glutamate receptor activity, acts as a thermoreceptor conferring sensitivity to cold temperatures. Functions in dorsal root ganglion neurons. This is Glutamate receptor ionotropic, kainate 2 from Danio rerio (Zebrafish).